Here is a 130-residue protein sequence, read N- to C-terminus: Con-Ins G2b (130 aa).

The N-terminal stretch at 1 to 23 (MTTSSYFLLVALGLLLYVRQSFS) is a signal peptide. 4 disulfide bridges follow: cysteine 29–cysteine 100, cysteine 41–cysteine 103, cysteine 53–cysteine 116, and cysteine 102–cysteine 107. The residue at position 34 (proline 34) is a 4-hydroxyproline; partial. Residues 54–77 (EEEEARRGGTNDGGKKRRRASPLR) are disordered. A propeptide spans 59-92 (RRGGTNDGGKKRRRASPLRKRRRFISMLKARAKR) (c peptide). Residues 68–77 (KKRRRASPLR) show a composition bias toward basic residues. 4-carboxyglutamate; partial is present on glutamate 111.

The protein belongs to the insulin family. Heterodimer of A and B chains; disulfide-linked. In terms of tissue distribution, expressed by the venom gland.

The protein localises to the secreted. Its function is as follows. This venom insulin, from a fish-hunting cone snail, facilitates prey capture by rapidly inducing hypoglycemic shock. Intraperitoneal injection of this peptide into zebrafish lowers blood glucose with the same potency than human insulin. In vivo, when applied to water, this peptide reduces overall locomotor activity of zebrafish larvae, observed as a significant decrease in the percentage of time spent swimming and movement frequency. This Conus geographus (Geography cone) protein is Con-Ins G2b.